A 353-amino-acid polypeptide reads, in one-letter code: JmjC domain-containing protein E (353 aa).

In terms of domain architecture, JmjC spans Tyr138–Lys348.

The chain is JmjC domain-containing protein E (jcdE) from Dictyostelium discoideum (Social amoeba).